The chain runs to 337 residues: Histidine N-acetyltransferase (337 aa).

Residues 1-2 (MK) constitute a propeptide, removed in mature form. Residues 21–156 (LQFAVATEED…QGILLVRFRA (136 aa)) form the N-acetyltransferase domain.

The catalysed reaction is L-histidine + acetyl-CoA = N(alpha)-acetyl-L-histidine + CoA + H(+). In terms of biological role, enzyme responsible for the N-acetyl-histidine (NAH) synthesis, which is a major constituent of brain and lens of ectothermic vertebrates. This Scomber australasicus (Blue mackerel) protein is Histidine N-acetyltransferase (hisat).